Reading from the N-terminus, the 214-residue chain is Methyltransferase HEMK2 (214 aa).

Positions 29, 51, 53, 77, 103, 104, and 122 each coordinate S-adenosyl-L-homocysteine. 7 residues coordinate S-adenosyl-L-methionine: Thr-29, Glu-51, Gly-53, Asp-77, Asp-103, Leu-104, and Asn-122. A protein is bound at residue Asn-122.

This sequence belongs to the eukaryotic/archaeal PrmC-related family. In terms of assembly, heterodimer; heterodimerization with TRMT112 is required for S-adenosyl-L-methionine-binding. As to quaternary structure, does not interact with TRMT112. Ubiquitinated, leading to its degradation by the proteasome. As to expression, widely expressed, with highest expression in parathyroid and pituitary glands, followed by adrenal gland and kidney, and lowest expression in leukocytes and mammary gland.

The protein resides in the nucleus. The catalysed reaction is L-lysyl-[histone] + S-adenosyl-L-methionine = N(6)-methyl-L-lysyl-[histone] + S-adenosyl-L-homocysteine + H(+). The enzyme catalyses L-glutaminyl-[protein] + S-adenosyl-L-methionine = N(5)-methyl-L-glutaminyl-[protein] + S-adenosyl-L-homocysteine + H(+). It catalyses the reaction methylarsonous acid + S-adenosyl-L-methionine = dimethylarsinate + S-adenosyl-L-homocysteine + 2 H(+). Methyltransferase that can methylate proteins and, to a lower extent, arsenic. Catalytic subunit of a heterodimer with TRMT112, which monomethylates 'Lys-12' of histone H4 (H4K12me1), a modification present at the promoters of numerous genes encoding cell cycle regulators. Catalytic subunit of a heterodimer with TRMT112, which catalyzes N5-methylation of Glu residue of proteins with a Gly-Gln-Xaa-Xaa-Xaa-Arg motif. Methylates ETF1 on 'Gln-185'; ETF1 needs to be complexed to ERF3 in its GTP-bound form to be efficiently methylated. May also play a role in the modulation of arsenic-induced toxicity by mediating the conversion of monomethylarsonous acid (3+) into the less toxic dimethylarsonic acid. It however only plays a limited role in arsenic metabolism compared with AS3MT. The sequence is that of Methyltransferase HEMK2 from Homo sapiens (Human).